The primary structure comprises 303 residues: Eukaryotic translation initiation factor 3 subunit F (303 aa).

Over residues 1 to 10 (MSLDTSSSAI) the composition is skewed to polar residues. A disordered region spans residues 1–25 (MSLDTSSSAIHLQLPPTSSSLRPPS). Residues 12-25 (LQLPPTSSSLRPPS) are compositionally biased toward low complexity. Residues 27–165 (ITVHPSVIAQ…VKGWVSQPLG (139 aa)) enclose the MPN domain.

It belongs to the eIF-3 subunit F family. Component of the eukaryotic translation initiation factor 3 (eIF-3) complex.

It is found in the cytoplasm. Functionally, component of the eukaryotic translation initiation factor 3 (eIF-3) complex, which is involved in protein synthesis of a specialized repertoire of mRNAs and, together with other initiation factors, stimulates binding of mRNA and methionyl-tRNAi to the 40S ribosome. The eIF-3 complex specifically targets and initiates translation of a subset of mRNAs involved in cell proliferation. In Cryptococcus neoformans var. neoformans serotype D (strain B-3501A) (Filobasidiella neoformans), this protein is Eukaryotic translation initiation factor 3 subunit F.